Reading from the N-terminus, the 787-residue chain is Protein translocase subunit SecA 2 (787 aa).

ATP-binding positions include glutamine 86, glycine 104–threonine 108, and aspartate 493.

Belongs to the SecA family. In terms of assembly, monomer and homodimer. Part of the essential Sec protein translocation apparatus which comprises SecA, SecYEG and auxiliary proteins SecDF. Other proteins may also be involved.

Its subcellular location is the cell membrane. It is found in the cytoplasm. The enzyme catalyses ATP + H2O + cellular proteinSide 1 = ADP + phosphate + cellular proteinSide 2.. In terms of biological role, part of the Sec protein translocase complex. Interacts with the SecYEG preprotein conducting channel. Has a central role in coupling the hydrolysis of ATP to the transfer of proteins into and across the cell membrane, serving as an ATP-driven molecular motor driving the stepwise translocation of polypeptide chains across the membrane. This chain is Protein translocase subunit SecA 2, found in Bacillus thuringiensis subsp. konkukian (strain 97-27).